The sequence spans 410 residues: MEQKPSKVECGSDPEESSTRSPDGKRKRKNGQCSLKTSMSGYIPSYLDKDEQCVVCGDKATGYHYRCITCEGCKGFFRRTIQKNLHPTYSCKYDSCCVIDKITRNQCQLCRFKKCIAVGMAMDLVLDDSKRVAKRKLIEQNRERRRKEEMIRSLQQRPEPTPEEWDLIHVATEAHRSTNAQGSHWKQRRKFLPDDIGQSPIVSMPDGDKVDLEAFSEFTKIITPAITRVVDFAKKLPMFSELPCEDQIILLKGCCMEIMSLRAAVRYDPESDTLTLSGEMAVKREQLKNGGLGVVSDAIFELGKSLSAFNLDDTEVALLQAVLLMSTDRSGLLCVDKIEKSQEAYLLAFEHYVNHRKHNIPHFWPKLLMKVTDLRMIGACHASRFLHMKVECPTELFPPLFLEVFEDQEV.

Residues 1–32 (MEQKPSKVECGSDPEESSTRSPDGKRKRKNGQ) are disordered. The interval 1–52 (MEQKPSKVECGSDPEESSTRSPDGKRKRKNGQCSLKTSMSGYIPSYLDKDEQ) is modulating. Zn(2+) is bound by residues C53, C56, C70, C73, C91, C97, C107, and C110. NR C4-type zinc fingers lie at residues 53–73 (CVVC…CEGC) and 91–115 (CKYD…FKKC). A DNA-binding region (nuclear receptor) is located at residues 53–127 (CVVCGDKATG…VGMAMDLVLD (75 aa)). The NR LBD domain occupies 163–407 (EEWDLIHVAT…PPLFLEVFED (245 aa)). 2 residues coordinate 3,3',5-triiodo-L-thyronine: R228 and S277.

This sequence belongs to the nuclear hormone receptor family. NR1 subfamily. In terms of assembly, binds DNA as a dimer; homodimer and heterodimer with RXRB. Interacts with NCOA3 and NCOA6 coactivators, leading to a strong increase of transcription of target genes. Probably interacts with SFPQ. Interacts with C1D. Interacts with AKAP13. Interacts with TP53INP2. Interacts with PER2. Interacts with TACC1. The interaction with isoform alpha-1, but not alpha-2, is decreased in the presence of thyroid hormone T3.

The protein resides in the nucleus. It is found in the cytoplasm. In terms of biological role, nuclear hormone receptor that can act as a repressor or activator of transcription. High affinity receptor for thyroid hormones, including triiodothyronine and thyroxine. The protein is Thyroid hormone receptor alpha (THRA) of Ovis aries (Sheep).